Consider the following 285-residue polypeptide: UPF0354 protein SH1179 (285 aa).

This sequence belongs to the UPF0354 family.

This is UPF0354 protein SH1179 from Staphylococcus haemolyticus (strain JCSC1435).